The following is a 401-amino-acid chain: Probable peptidoglycan glycosyltransferase FtsW (401 aa).

The Cytoplasmic segment spans residues 1–26; the sequence is MAEVLRWLRLDLGQSGGLAWERLDWR. A helical transmembrane segment spans residues 27-47; the sequence is LALTVLALAGLGLVMVGSASV. The Periplasmic segment spans residues 48–65; that stretch reads SIAEGATGDPLHYLYRQA. A helical membrane pass occupies residues 66-86; sequence VFLAVALMAAVACLHLSLDQF. At 87-88 the chain is on the cytoplasmic side; that stretch reads YR. The chain crosses the membrane as a helical span at residues 89 to 109; the sequence is GGPVLLVLGFFLLLVVLIPGV. Residues 110–118 lie on the Periplasmic side of the membrane; sequence GREVNGATR. Residues 119-139 traverse the membrane as a helical segment; that stretch reads WIPLGLINLQVAEVARVCFII. Over 140-154 the chain is Cytoplasmic; that stretch reads YLAGYCVRRHAELPN. Residues 155-175 form a helical membrane-spanning segment; it reads TSSAFAVPLAVFSLAAVLLLA. Residues 176–180 lie on the Periplasmic side of the membrane; it reads QPDFG. The helical transmembrane segment at 181 to 201 threads the bilayer; the sequence is TALVLMATALGLLFLAGASLW. Arg202 is a topological domain (cytoplasmic). The helical transmembrane segment at 203 to 223 threads the bilayer; sequence IGVLGLLLAGAAWLLIVGSPY. Over 224-278 the chain is Periplasmic; it reads RWQRLTTFTDPWADPFNAGFQLTQSLIAIGRGEWFGVGLGASVQKLFYLPEAHTD. The chain crosses the membrane as a helical span at residues 279–299; that stretch reads FLFAVLAEELGLLGVVVVVAL. At 300–322 the chain is on the cytoplasmic side; sequence FTYLAWRGMQIGLASLRADRPFG. The chain crosses the membrane as a helical span at residues 323–343; it reads AYLAWGLTISIGLQAFINMAV. Residues 344-354 are Periplasmic-facing; sequence TMGLLPTKGLT. The helical transmembrane segment at 355–375 threads the bilayer; sequence LPLMSYGGSSLIMTGIALALL. Residues 376 to 401 lie on the Cytoplasmic side of the membrane; the sequence is LRVDYEARLAAQQPRPRKRPSGRVRP.

This sequence belongs to the SEDS family. FtsW subfamily.

The protein localises to the cell inner membrane. The enzyme catalyses [GlcNAc-(1-&gt;4)-Mur2Ac(oyl-L-Ala-gamma-D-Glu-L-Lys-D-Ala-D-Ala)](n)-di-trans,octa-cis-undecaprenyl diphosphate + beta-D-GlcNAc-(1-&gt;4)-Mur2Ac(oyl-L-Ala-gamma-D-Glu-L-Lys-D-Ala-D-Ala)-di-trans,octa-cis-undecaprenyl diphosphate = [GlcNAc-(1-&gt;4)-Mur2Ac(oyl-L-Ala-gamma-D-Glu-L-Lys-D-Ala-D-Ala)](n+1)-di-trans,octa-cis-undecaprenyl diphosphate + di-trans,octa-cis-undecaprenyl diphosphate + H(+). It participates in cell wall biogenesis; peptidoglycan biosynthesis. In terms of biological role, peptidoglycan polymerase that is essential for cell division. The protein is Probable peptidoglycan glycosyltransferase FtsW of Alkalilimnicola ehrlichii (strain ATCC BAA-1101 / DSM 17681 / MLHE-1).